The primary structure comprises 188 residues: Inactive cysteine S-methyltransferase OspZ (188 aa).

It belongs to the NleE/OspZ family.

It localises to the secreted. The protein resides in the host cytoplasm. It is found in the host nucleus. Its function is as follows. Inactive effector protein: in contrast to other members of the family, does not have the ability to inhibit host cell NF-kappa-B activation. Probably lacks cysteine S-methyltransferase activity due to its inability to bind S-adenosyl-L-methionine at the C-terminus. This chain is Inactive cysteine S-methyltransferase OspZ, found in Shigella flexneri.